The chain runs to 1129 residues: Ubiquitin carboxyl-terminal hydrolase 15 (1129 aa).

Residues 1–26 (MVLSNVDAEEVNMDSSMELEESSQEP) are disordered. The span at 7-23 (DAEEVNMDSSMELEESS) shows a compositional bias: acidic residues. Residues 51 to 204 (HASYSWVVKN…NDEICISVTV (154 aa)) form the MATH domain. Positions 230–545 (VGLKNQGATC…NAYMLVYFRK (316 aa)) constitute a USP domain. Residue C239 is the Nucleophile of the active site. H481 serves as the catalytic Proton acceptor.

It belongs to the peptidase C19 family.

It is found in the nucleus. It carries out the reaction Thiol-dependent hydrolysis of ester, thioester, amide, peptide and isopeptide bonds formed by the C-terminal Gly of ubiquitin (a 76-residue protein attached to proteins as an intracellular targeting signal).. Its function is as follows. Hydrolase that deubiquitinates target proteins. Cleaves the UBL propeptide in sde2. Involved in regulating the steady-state levels of proteins including prp4. The polypeptide is Ubiquitin carboxyl-terminal hydrolase 15 (Schizosaccharomyces pombe (strain 972 / ATCC 24843) (Fission yeast)).